A 531-amino-acid chain; its full sequence is 2,3-bisphosphoglycerate-independent phosphoglycerate mutase (531 aa).

Mn(2+) is bound by residues Asp15 and Ser65. Ser65 acts as the Phosphoserine intermediate in catalysis. Residues His126, 155–156 (RD), Arg187, Arg193, 257–260 (RPDR), and Lys330 contribute to the substrate site. Mn(2+)-binding residues include Asp397, His401, Asp438, His439, and His456.

It belongs to the BPG-independent phosphoglycerate mutase family. Monomer. Mn(2+) serves as cofactor.

The catalysed reaction is (2R)-2-phosphoglycerate = (2R)-3-phosphoglycerate. It participates in carbohydrate degradation; glycolysis; pyruvate from D-glyceraldehyde 3-phosphate: step 3/5. Catalyzes the interconversion of 2-phosphoglycerate and 3-phosphoglycerate. This Thermosynechococcus vestitus (strain NIES-2133 / IAM M-273 / BP-1) protein is 2,3-bisphosphoglycerate-independent phosphoglycerate mutase.